The primary structure comprises 94 residues: Acylphosphatase (94 aa).

The Acylphosphatase-like domain occupies 5 to 94; sequence RLTAFVHGHV…PRDVEGFVER (90 aa). Active-site residues include arginine 20 and asparagine 38.

It belongs to the acylphosphatase family.

It catalyses the reaction an acyl phosphate + H2O = a carboxylate + phosphate + H(+). The sequence is that of Acylphosphatase (acyP) from Corynebacterium glutamicum (strain R).